Here is a 295-residue protein sequence, read N- to C-terminus: MTDENIRQIAFYGKGGIGKSTTSQNTLAAMAEMGQRIMIVGCDPKADSTRLMLHAKAKTTVLHLAAERGAVEDLELHEVMLTGFRGVRCVESGGPEPGVGCAGRGIITAINFLEENGAYQDLDFVSYDVLGDVVCGGFAMPIREGKAQEIYIVTSGEMMAMYAANNIARGILKYAHSGGVRLGGLICNSRKTDREAELIENLAERLNTQMIHFVPRDNIVQHAELRRMTVNEYAPDSNQGQEYRALAKKIINNDKLTIPTPIEMDELEALLIEYGILDDDSKHAEIIGKPAEATK.

13-20 (GKGGIGKS) contributes to the ATP binding site. Cys-101 serves as a coordination point for [4Fe-4S] cluster. Arg-104 carries the post-translational modification ADP-ribosylarginine; by dinitrogenase reductase ADP-ribosyltransferase. Cys-135 lines the [4Fe-4S] cluster pocket.

This sequence belongs to the NifH/BchL/ChlL family. As to quaternary structure, homodimer. [4Fe-4S] cluster is required as a cofactor. The reversible ADP-ribosylation of Arg-104 inactivates the nitrogenase reductase and regulates nitrogenase activity.

It catalyses the reaction N2 + 8 reduced [2Fe-2S]-[ferredoxin] + 16 ATP + 16 H2O = H2 + 8 oxidized [2Fe-2S]-[ferredoxin] + 2 NH4(+) + 16 ADP + 16 phosphate + 6 H(+). Its function is as follows. The key enzymatic reactions in nitrogen fixation are catalyzed by the nitrogenase complex, which has 2 components: the iron protein and the molybdenum-iron protein. The sequence is that of Nitrogenase iron protein (nifH) from Nostoc sp. (strain PCC 6720) (Anabaenopsis circularis).